The primary structure comprises 577 residues: Arginine--tRNA ligase (577 aa).

A 'HIGH' region motif is present at residues P122–H132.

Belongs to the class-I aminoacyl-tRNA synthetase family. Monomer.

The protein localises to the cytoplasm. It catalyses the reaction tRNA(Arg) + L-arginine + ATP = L-arginyl-tRNA(Arg) + AMP + diphosphate. In Salmonella gallinarum (strain 287/91 / NCTC 13346), this protein is Arginine--tRNA ligase.